Consider the following 455-residue polypeptide: Bifunctional protein GlmU (455 aa).

The segment at 1-227 (MGLSVIILAA…CEEVQGVNDR (227 aa)) is pyrophosphorylase. UDP-N-acetyl-alpha-D-glucosamine contacts are provided by residues 8 to 11 (LAAG), lysine 22, glutamine 73, 78 to 79 (GT), 100 to 102 (YGD), glycine 137, glutamate 152, asparagine 167, and asparagine 225. Aspartate 102 provides a ligand contact to Mg(2+). Asparagine 225 provides a ligand contact to Mg(2+). The linker stretch occupies residues 228–248 (WELTKLERYYQRLMAKKLSLA). Residues 249-455 (GVTIIDPERF…KGWHRPTKKE (207 aa)) are N-acetyltransferase. Positions 332 and 350 each coordinate UDP-N-acetyl-alpha-D-glucosamine. Histidine 362 serves as the catalytic Proton acceptor. UDP-N-acetyl-alpha-D-glucosamine contacts are provided by tyrosine 365 and asparagine 376. Residues alanine 379, 385–386 (NY), serine 404, alanine 422, and arginine 439 contribute to the acetyl-CoA site.

In the N-terminal section; belongs to the N-acetylglucosamine-1-phosphate uridyltransferase family. The protein in the C-terminal section; belongs to the transferase hexapeptide repeat family. Homotrimer. Mg(2+) is required as a cofactor.

The protein localises to the cytoplasm. The catalysed reaction is alpha-D-glucosamine 1-phosphate + acetyl-CoA = N-acetyl-alpha-D-glucosamine 1-phosphate + CoA + H(+). It carries out the reaction N-acetyl-alpha-D-glucosamine 1-phosphate + UTP + H(+) = UDP-N-acetyl-alpha-D-glucosamine + diphosphate. The protein operates within nucleotide-sugar biosynthesis; UDP-N-acetyl-alpha-D-glucosamine biosynthesis; N-acetyl-alpha-D-glucosamine 1-phosphate from alpha-D-glucosamine 6-phosphate (route II): step 2/2. Its pathway is nucleotide-sugar biosynthesis; UDP-N-acetyl-alpha-D-glucosamine biosynthesis; UDP-N-acetyl-alpha-D-glucosamine from N-acetyl-alpha-D-glucosamine 1-phosphate: step 1/1. It functions in the pathway bacterial outer membrane biogenesis; LPS lipid A biosynthesis. Functionally, catalyzes the last two sequential reactions in the de novo biosynthetic pathway for UDP-N-acetylglucosamine (UDP-GlcNAc). The C-terminal domain catalyzes the transfer of acetyl group from acetyl coenzyme A to glucosamine-1-phosphate (GlcN-1-P) to produce N-acetylglucosamine-1-phosphate (GlcNAc-1-P), which is converted into UDP-GlcNAc by the transfer of uridine 5-monophosphate (from uridine 5-triphosphate), a reaction catalyzed by the N-terminal domain. The protein is Bifunctional protein GlmU of Coxiella burnetii (strain CbuG_Q212) (Coxiella burnetii (strain Q212)).